The chain runs to 3680 residues: Dystrophin (3680 aa).

An actin-binding region spans residues 1 to 237 (MLWWEEVEDC…ILMYITSLFQ (237 aa)). 2 consecutive Calponin-homology (CH) domains span residues 15–119 (DVQK…LHWQ) and 134–240 (TNSE…QVLP). The tract at residues 63-72 (PKEKGSTRVH) is ANK2- and ANK-3 binding. Polar residues predominate over residues 310–323 (TSDPTRSPLPSQHL). Positions 310–332 (TSDPTRSPLPSQHLETPEDKSFG) are disordered. Spectrin repeat units follow at residues 340 to 448 (ANLD…NLHK), 449 to 557 (VLMD…LLQD), 560 to 668 (LKWQ…QISQ), 720 to 829 (EIRK…WLEY), 831 to 935 (NNII…ELQT), 944 to 1047 (RYQE…KLEE), 1050 to 1156 (AKLR…ALKG), 1159 to 1265 (DKTV…TLEE), 1268 to 1369 (ACWH…LLEQ), 1370 to 1465 (SIQS…LFQK), 1470 to 1570 (EQRL…QLEK), 1573 to 1678 (KLSR…LLLE), 1681 to 1780 (KHME…KASI), 1781 to 1876 (PLKE…KALE), 1879 to 1981 (HQWY…TVHE), 1994 to 2103 (EISY…RFDR), 2106 to 2210 (EKWR…RLEE), 2213 to 2320 (NILS…EIEA), 2321 to 2418 (HVKD…LRAK), 2470 to 2572 (FNRA…QLTE), 2575 to 2681 (KDST…ALEE), 2684 to 2797 (RLLQ…HLEA), 2803 to 2925 (KRLH…RKID), and 2930 to 3035 (RLQE…QLHE). The interaction with SYNM stretch occupies residues 1418–1915 (DLTSHEISLE…PEPRDERKIK (498 aa)). One can recognise a WW domain in the interval 3050–3083 (TSVQGPWERAISPNKVPYYINHETQTTCWDHPKM). Positions 3053–3403 (QGPWERAISP…TVLEGDNMET (351 aa)) are interaction with SYNM. Residues 3303–3359 (KHQAKCNICKECPIIGFRYRSLKHFNYDICQSCFFSGRVAKGHKMHYPMVEYCTPTT) form a ZZ-type; degenerate zinc finger. The Zn(2+) site is built by Cys3308, Cys3311, Cys3332, and Cys3335. Positions 3461-3513 (DDEHLLIQHYWRSLNQESPLSQPRSPAQILISLESEERGELERILADLEGRNR) are binds to SNTB1. Ser3478, Ser3485, and Ser3495 each carry phosphoserine. Disordered regions lie at residues 3524-3549 (QQHE…QSPR) and 3595-3680 (PQAE…EDTM). Composition is skewed to polar residues over residues 3602 to 3621 (NGTT…SSQP) and 3658 to 3668 (LNHSFPSSRGR). Phosphoserine occurs at positions 3607, 3608, 3612, 3618, 3619, and 3661.

As to quaternary structure, interacts with SYNM. Interacts with the syntrophins SNTG1 and SNTG2. Interacts with KRT19. Component of the dystrophin-associated glycoprotein complex which is composed of three subcomplexes: a cytoplasmic complex comprised of DMD (or UTRN), DTNA and a number of syntrophins, such as SNTB1, SNTB2, SNTG1 and SNTG2, the transmembrane dystroglycan complex, and the sarcoglycan-sarcospan complex. Interacts with DAG1 (betaDAG1) with DMD; the interaction is inhibited by phosphorylation on the PPXY motif of DAG1. Interacts with SYNM; SNTA1 and SNTB1. Interacts with CMYA5. Directly interacts with ANK2 and ANK3; these interactions do not interfere with betaDAG1-binding and are necessary for proper localization in muscle cells. Identified in a dystroglycan complex that contains at least PRX, DRP2, UTRN, DMD and DAG1. Interacts with DTNB. Interacts with PGM5; the interaction is direct. Interacts with NOS1; localizes NOS1 to sarcolemma in muscle cells.

The protein resides in the cell membrane. It is found in the sarcolemma. It localises to the cytoplasm. The protein localises to the cytoskeleton. Its subcellular location is the postsynaptic cell membrane. Its function is as follows. Anchors the extracellular matrix to the cytoskeleton via F-actin. Ligand for dystroglycan. Component of the dystrophin-associated glycoprotein complex which accumulates at the neuromuscular junction (NMJ) and at a variety of synapses in the peripheral and central nervous systems and has a structural function in stabilizing the sarcolemma. Also implicated in signaling events and synaptic transmission. This chain is Dystrophin (DMD), found in Canis lupus familiaris (Dog).